The chain runs to 382 residues: D-galactonate dehydratase (382 aa).

Residue D183 participates in Mg(2+) binding. H185 functions as the Proton donor in the catalytic mechanism. 2 residues coordinate Mg(2+): E209 and E235. The Proton acceptor role is filled by H285.

Belongs to the mandelate racemase/muconate lactonizing enzyme family. GalD subfamily. Mg(2+) is required as a cofactor.

It catalyses the reaction D-galactonate = 2-dehydro-3-deoxy-D-galactonate + H2O. The protein operates within carbohydrate acid metabolism; D-galactonate degradation; D-glyceraldehyde 3-phosphate and pyruvate from D-galactonate: step 1/3. Catalyzes the dehydration of D-galactonate to 2-keto-3-deoxy-D-galactonate. In Salmonella dublin (strain CT_02021853), this protein is D-galactonate dehydratase.